Consider the following 635-residue polypeptide: Putative adagio-like protein 2 (635 aa).

Positions 1–25 (MEWDSDSEGSGDEEEEEEEEEEEGV) are enriched in acidic residues. Residues 1 to 32 (MEWDSDSEGSGDEEEEEEEEEEEGVEVGGGGD) are disordered. Residues 44–123 (ALAIEGVLGA…TDIRRCLEEG (80 aa)) form the PAS domain. At C91 the chain carries S-4a-FMN cysteine. An F-box domain is found at 209–255 (SDLFLLSDEVLCQKILSRLSPRDIASVNSVCKRLYHLTRNDDLWRMV). 4 Kelch repeats span residues 371–421 (RLVL…TLDG), 423–474 (KLVV…VYDG), 476–530 (KILM…PPPR), and 542–594 (RILI…VVGG).

Belongs to the ADAGIO family. FMN binds covalently to cysteine after exposure to blue light and is reversed in the dark.

It is found in the nucleus. It functions in the pathway protein modification; protein ubiquitination. Its function is as follows. Component of an E3 ubiquitin ligase complex that plays a central role in blue light-dependent circadian cycles. Acts as a blue light photoreceptor, due to the presence of FMN, that mediates light-regulated protein degradation of critical clock components by targeting them to the proteasome complex. The chain is Putative adagio-like protein 2 from Oryza sativa subsp. japonica (Rice).